The following is a 323-amino-acid chain: Acetyl-coenzyme A carboxylase carboxyl transferase subunit alpha (323 aa).

Residues 40–293 (LSEKSLQLTK…RKALSDSLKT (254 aa)) form the CoA carboxyltransferase C-terminal domain.

Belongs to the AccA family. In terms of assembly, acetyl-CoA carboxylase is a heterohexamer composed of biotin carboxyl carrier protein (AccB), biotin carboxylase (AccC) and two subunits each of ACCase subunit alpha (AccA) and ACCase subunit beta (AccD).

The protein resides in the cytoplasm. The enzyme catalyses N(6)-carboxybiotinyl-L-lysyl-[protein] + acetyl-CoA = N(6)-biotinyl-L-lysyl-[protein] + malonyl-CoA. The protein operates within lipid metabolism; malonyl-CoA biosynthesis; malonyl-CoA from acetyl-CoA: step 1/1. Its function is as follows. Component of the acetyl coenzyme A carboxylase (ACC) complex. First, biotin carboxylase catalyzes the carboxylation of biotin on its carrier protein (BCCP) and then the CO(2) group is transferred by the carboxyltransferase to acetyl-CoA to form malonyl-CoA. The chain is Acetyl-coenzyme A carboxylase carboxyl transferase subunit alpha from Polynucleobacter asymbioticus (strain DSM 18221 / CIP 109841 / QLW-P1DMWA-1) (Polynucleobacter necessarius subsp. asymbioticus).